Consider the following 1164-residue polypeptide: Integrin alpha-5 (1164 aa).

Basic and acidic residues predominate over residues 1-14 (MREEGGGSREKEGE). The disordered stretch occupies residues 1 to 119 (MREEGGGSRE…MGSRTPGSPL (119 aa)). Residues 81 to 90 (LLPALSHSPL) are compositionally biased toward low complexity. The stretch at 156–221 (NLDAEAPAVL…CPWGTSPAQC (66 aa)) is one FG-GAP 1 repeat. N-linked (GlcNAc...) asparagine glycosylation occurs at Asn-197. The cysteines at positions 212 and 221 are disulfide-linked. A Phosphoserine modification is found at Ser-240. FG-GAP repeat units lie at residues 241–301 (SEGE…QILE), 306–358 (RSDF…AESY), 372–424 (QTRQ…GSDI), 425–490 (RSLY…GMEP), 491–550 (TPTL…GLAS), and 554–617 (QVLL…IFPA). Cys-269 and Cys-289 are disulfide-bonded. N-linked (GlcNAc...) asparagine glycosylation is present at Asn-295. Cysteines 305 and 318 form a disulfide. Residues Gln-375 and Asp-382 each contribute to the a protein site. Residues Glu-393, Ser-395, Asp-397, and Asp-401 each contribute to the Ca(2+) site. Residues Asn-410, Asn-420, and Asn-429 are each glycosylated (N-linked (GlcNAc...) asparagine). Positions 447, 449, 451, 453, 455, 514, 516, 518, 520, 522, 578, 580, 582, 584, and 586 each coordinate Ca(2+). Cys-626 and Cys-635 are oxidised to a cystine. N-linked (GlcNAc...) asparagine glycans are attached at residues Asn-637, Asn-643, Asn-706, and Asn-722. Cysteines 641 and 697 form a disulfide. Cysteines 758 and 764 form a disulfide. N-linked (GlcNAc...) asparagine glycosylation is found at Asn-788, Asn-825, Asn-837, Asn-886, and Asn-982. Cys-831 and Cys-844 are disulfide-bonded. Disulfide bonds link Cys-962-Cys-1072, Cys-983-Cys-1036, and Cys-1026-Cys-1031. The tract at residues 983–1022 (CTTSHPPNPEGLELDPEGSQHHRLQRRDVPGRSPASSGPQ) is disordered. Residues 1114–1134 (LWIIILAILIGLLLLGLLIYI) form a helical membrane-spanning segment. At 1135–1164 (LYKLGFFKRSLPYGTAMEKAQLKPPATSDA) the chain is on the cytoplasmic side. Residues 1136–1143 (YKLGFFKR) form an interaction with HPS5 region. A GFFKR motif motif is present at residues 1139–1143 (GFFKR).

This sequence belongs to the integrin alpha chain family. As to quaternary structure, heterodimer of an alpha and a beta subunit. The alpha subunit is composed of a heavy and a light chain linked by a disulfide bond. Alpha-5 associates with beta-1. Interacts with NISCH. Interacts with HPS5. Interacts with RAB21 and COMP. Interacts with CIB1. ITGA5:ITGB1 interacts with CCN3. ITGA5:ITGB1 interacts with FBN1. ITGA5:ITGB1 interacts with IL1B. ITGA5:ITGB1 interacts with ACE2. ITGA5:ITGB1 interacts with SELP. Interacts with ANGPT2. ITGA5:ITGB1 interacts with IGFBP2. ITGA5:ITGB1 interacts with IGFBP1. Proteolytic cleavage by PCSK5 mediates activation of the precursor.

It localises to the cell membrane. The protein localises to the cell junction. The protein resides in the focal adhesion. In terms of biological role, integrin alpha-5/beta-1 (ITGA5:ITGB1) is a receptor for fibronectin and fibrinogen. It recognizes the sequence R-G-D in its ligands. ITGA5:ITGB1 binds to PLA2G2A via a site (site 2) which is distinct from the classical ligand-binding site (site 1) and this induces integrin conformational changes and enhanced ligand binding to site 1. ITGA5:ITGB1 acts as a receptor for fibrillin-1 (FBN1) and mediates R-G-D-dependent cell adhesion to FBN1. ITGA5:ITGB1 acts as a receptor for fibronectin (FN1) and mediates R-G-D-dependent cell adhesion to FN1. ITGA5:ITGB1 is a receptor for IL1B and binding is essential for IL1B signaling. ITGA5:ITGB3 is a receptor for soluble CD40LG and is required for CD40/CD40LG signaling. This is Integrin alpha-5 (ITGA5) from Bos taurus (Bovine).